Reading from the N-terminus, the 102-residue chain is Parathymosin (102 aa).

Residues 1–102 (MSEKSVEAAA…RQKTENGASA (102 aa)) form a disordered region. Residue Ser-2 is modified to N-acetylserine. Position 2 is a phosphoserine (Ser-2). At Lys-4 the chain carries N6-acetyllysine. Residues Ser-5 and Ser-13 each carry the phosphoserine modification. Residues 13–37 (SAKDLKEKKEKVEEKAGRKERKKEV) show a composition bias toward basic and acidic residues. Lys-15 is modified (N6-acetyllysine). The span at 38 to 76 (VEEEENGAEEEEEETAEDGEEEDDGDEEDEEEEEEEDEG) shows a compositional bias: acidic residues. At Thr-52 the chain carries Phosphothreonine. At Lys-92 the chain carries N6-acetyllysine.

This sequence belongs to the pro/parathymosin family.

Its function is as follows. Parathymosin may mediate immune function by blocking the effect of prothymosin alpha which confers resistance to certain opportunistic infections. The protein is Parathymosin (PTMS) of Bos taurus (Bovine).